A 133-amino-acid polypeptide reads, in one-letter code: MKKPPSSPAACPCGKPRAYPDCCGRWHAGALFLQAPDAESLMRSRYSAFVLDQLDYLLQTWHPDTRPSELEPNAADVKWLGLQIKASQQQDDTHATVEFVARLRQAGRATRLHELSRFVKEEQRWYYVDGDIR.

The protein belongs to the UPF0225 family.

The chain is UPF0225 protein BPP1723 from Bordetella parapertussis (strain 12822 / ATCC BAA-587 / NCTC 13253).